The chain runs to 356 residues: Heparan sulfate 2-O-sulfotransferase 1 (356 aa).

Over 1–11 (MGLLRIMMPPK) the chain is Cytoplasmic. The chain crosses the membrane as a helical; Signal-anchor for type II membrane protein span at residues 12 to 28 (LQLLAVLTFGVLMLFLE). A coiled-coil region spans residues 24-51 (MLFLENQIQNLEESREKLERAIARHEVR). Over 29-356 (NQIQNLEESR…FYEKIYPKSN (328 aa)) the chain is Lumenal. The adenosine 3',5'-bisphosphate site is built by Lys83, Thr84, Ala85, Ser86, Thr87, and Ser88. 2 N-linked (GlcNAc...) asparagine glycosylation sites follow: Asn108 and Asn127. Residues His140 and His142 contribute to the active site. Adenosine 3',5'-bisphosphate is bound by residues Arg164 and Ser172. Intrachain disulfides connect Cys201–Cys209 and Cys222–Cys228. Residues Tyr279, Ser285, Thr290, and Lys293 each contribute to the adenosine 3',5'-bisphosphate site.

It belongs to the sulfotransferase 3 family. In terms of assembly, homotrimer.

The protein resides in the golgi apparatus membrane. Its function is as follows. Catalyzes the transfer of a sulfo group from 3'-phospho-5'-adenylyl sulfate (PAPS) to the 2-OH position of iduronic acid (IdoA) or glucuronic acid (GlcA) within the heparan sulfate (HS) chain and participates in HS biosynthesis. This is Heparan sulfate 2-O-sulfotransferase 1 from Xenopus laevis (African clawed frog).